Here is a 342-residue protein sequence, read N- to C-terminus: Hypoxia responsive morphology factor C (342 aa).

The Bipartite nuclear localization signal signature appears at 46 to 68 (RMKIPRRKSEYSSHDRLKRARKI). Positions 151–181 (ADDAWAYNAADMDTAVKFFSEAIYKAIESSP) are RNA recognition motif (RRM)-like domain.

Belongs to the hrmA family.

The protein localises to the nucleus. Functionally, probably modulates the generation of the hypoxia-typic morphotype (called H-MORPH) with altered biofilm architecture that leads to increased host inflammation, rapid disease progression, and mortality in a murine model of invasive aspergillosis. The chain is Hypoxia responsive morphology factor C from Aspergillus fumigatus (strain CBS 144.89 / FGSC A1163 / CEA10) (Neosartorya fumigata).